A 59-amino-acid polypeptide reads, in one-letter code: Large ribosomal subunit protein bL32 (59 aa).

The tract at residues 1–20 (MAVQQNKKSRSRKGMRRSHD) is disordered. Residues 7–19 (KKSRSRKGMRRSH) are compositionally biased toward basic residues.

The protein belongs to the bacterial ribosomal protein bL32 family.

The sequence is that of Large ribosomal subunit protein bL32 from Nitratidesulfovibrio vulgaris (strain ATCC 29579 / DSM 644 / CCUG 34227 / NCIMB 8303 / VKM B-1760 / Hildenborough) (Desulfovibrio vulgaris).